The chain runs to 412 residues: CinA-like protein (412 aa).

Belongs to the CinA family.

This is CinA-like protein from Kosmotoga olearia (strain ATCC BAA-1733 / DSM 21960 / TBF 19.5.1).